Consider the following 152-residue polypeptide: 3-hydroxyacyl-[acyl-carrier-protein] dehydratase FabZ (152 aa).

H54 is a catalytic residue.

This sequence belongs to the thioester dehydratase family. FabZ subfamily.

The protein localises to the cytoplasm. The catalysed reaction is a (3R)-hydroxyacyl-[ACP] = a (2E)-enoyl-[ACP] + H2O. Its function is as follows. Involved in unsaturated fatty acids biosynthesis. Catalyzes the dehydration of short chain beta-hydroxyacyl-ACPs and long chain saturated and unsaturated beta-hydroxyacyl-ACPs. This Roseobacter denitrificans (strain ATCC 33942 / OCh 114) (Erythrobacter sp. (strain OCh 114)) protein is 3-hydroxyacyl-[acyl-carrier-protein] dehydratase FabZ.